Reading from the N-terminus, the 624-residue chain is LRR receptor kinase BAK1 (624 aa).

An N-terminal signal peptide occupies residues 1–25; the sequence is MAAPRWAVWAVLLLRLLVPAARVLA. Over 26–237 the chain is Extracellular; the sequence is NMEGDALHSL…QSPGSSSSTG (212 aa). LRR repeat units lie at residues 91–115, 117–139, 140–163, and 164–188; these read LKNL…LGNL, NLVS…LGNL, LKLR…LTAI, and TALQ…SFSL. N-linked (GlcNAc...) asparagine glycans are attached at residues N103, N114, N127, N149, and N175. A disordered region spans residues 205–236; the sequence is TTKPCPGAPPFSPPPPYNPPTPVQSPGSSSST. Over residues 210 to 227 the composition is skewed to pro residues; sequence PGAPPFSPPPPYNPPTPV. A helical membrane pass occupies residues 238 to 258; the sequence is AIAGGVAAGAALLFAIPAIGF. Residues 259–624 are Cytoplasmic-facing; sequence AWYRRRKPQE…LHAVELSGPR (366 aa). The Protein kinase domain maps to 301–588; that stretch reads FSNKNILGRG…GLAERWEEWQ (288 aa). ATP contacts are provided by residues 307–315 and K329; that span reads LGRGGFGKV. D428 acts as the Proton acceptor in catalysis.

The protein belongs to the protein kinase superfamily. Ser/Thr protein kinase family. Forms homodimers. Interacts with BRI1. Interacts with REM4.1.

The protein resides in the cell membrane. It catalyses the reaction L-seryl-[protein] + ATP = O-phospho-L-seryl-[protein] + ADP + H(+). It carries out the reaction L-threonyl-[protein] + ATP = O-phospho-L-threonyl-[protein] + ADP + H(+). Its function is as follows. LRR receptor kinase involved in defense response. Does not seem to be required specifically for XA21-mediated immunity or basal resistance to Xanthomonas oryzae pv. oryzae (Xoo), or immunity to Magnaporthe oryzae. Involved in brassinosteroid (BR) signaling pathway. Acts as a coreceptor of BRI1. Forms at the plasma membrane a receptor complex with BRI1 which is activated in response to brassinolide. Phosphorylates BRI1. Required for normal plant growth and leaf development. Possesses kinase activity in vitro. This Oryza sativa subsp. indica (Rice) protein is LRR receptor kinase BAK1.